A 2974-amino-acid polypeptide reads, in one-letter code: Mediator of RNA polymerase II transcription subunit 13 (2974 aa).

Basic and acidic residues-rich tracts occupy residues 284–299 (EKEP…KTPE), 340–367 (MFEP…AREV), 374–390 (RREE…RADD), and 624–633 (SREKRKEYQP). Disordered stretches follow at residues 284 to 309 (EKEP…PQTT), 340 to 394 (MFEP…NLED), 624 to 654 (SREK…KRKV), 677 to 749 (FNAW…FADI), 764 to 801 (LYNP…PKEE), 1032 to 1063 (PHGS…QDGE), 1099 to 1134 (GMLS…YPTP), 1140 to 1159 (LQAD…FRST), 1281 to 1342 (TLAR…TPTY), 1416 to 1486 (QGGL…DATA), 2052 to 2078 (ELKK…ATPA), and 2247 to 2309 (QDEA…PAGM). Positions 351-396 (KEETAAEKEKRMAAREVRRLRRQRREERRREMEKQRRADDNLEDYD) form a coiled coil. 2 stretches are compositionally biased toward basic residues: residues 634–654 (YHRK…KRKV) and 677–688 (FNAWKQKKKGPP). Over residues 689–717 (PKKDLAKKEAAADKDKDKDKEKDKEKDKD) the composition is skewed to basic and acidic residues. Positions 1035-1048 (SFDHDSEPEFDEQR) are enriched in basic and acidic residues. 2 stretches are compositionally biased toward polar residues: residues 1122 to 1134 (IESQ…YPTP) and 1140 to 1149 (LQADASQAHS). 2 stretches are compositionally biased toward pro residues: residues 1284–1299 (RPPP…PTPM) and 1326–1340 (PAYP…PTTP). The span at 1443-1464 (IRNTDAPNDPTVSKLQSAVSRN) shows a compositional bias: polar residues. Residues 1473 to 1486 (AATSIPTATDDATA) show a composition bias toward low complexity. A compositionally biased stretch (polar residues) spans 2064 to 2073 (STQSENSEGN). Residues 2220–2301 (AVEGRLKRQK…EQYPAEESQA (82 aa)) are a coiled coil. Basic and acidic residues-rich tracts occupy residues 2247–2258 (QDEADKREKMDE) and 2281–2292 (EEKKRNKQKENE). The interval 2347–2974 (WKQRDTRVQN…LYHSVARLLV (628 aa)) is mediates transcriptional repression.

The protein belongs to the Mediator complex subunit 13 family. As to quaternary structure, component of the Mediator complex.

It is found in the nucleus. In terms of biological role, component of the Mediator complex, a coactivator involved in regulated gene transcription of nearly all RNA polymerase II-dependent genes. Mediator functions as a bridge to convey information from gene-specific regulatory proteins to the basal RNA polymerase II transcription machinery. Mediator is recruited to promoters by direct interactions with regulatory proteins and serves as a scaffold for the assembly of a functional preinitiation complex with RNA polymerase II and the general transcription factors. This chain is Mediator of RNA polymerase II transcription subunit 13 (let-19), found in Caenorhabditis briggsae.